Here is a 335-residue protein sequence, read N- to C-terminus: Trans-1,2-dihydrobenzene-1,2-diol dehydrogenase (335 aa).

It belongs to the Gfo/Idh/MocA family. As to quaternary structure, homodimer.

It catalyses the reaction (1R,2R)-1,2-dihydrobenzene-1,2-diol + NADP(+) = catechol + NADPH + H(+). The enzyme catalyses D-xylose + NADP(+) = D-xylono-1,5-lactone + NADPH + H(+). The polypeptide is Trans-1,2-dihydrobenzene-1,2-diol dehydrogenase (DHDH) (Bos taurus (Bovine)).